A 492-amino-acid chain; its full sequence is Prenylcysteine oxidase 1-like (492 aa).

An N-terminal signal peptide occupies residues 1–21 (MAHAARLLAALAALLAAAATG). Asparagine 340 is a glycosylation site (N-linked (GlcNAc...) asparagine).

This sequence belongs to the prenylcysteine oxidase family. It depends on FAD as a cofactor.

It localises to the secreted. Functionally, likely to have oxidoreductase activity. Required in the mevalonate pathway to regulate prenylation and enhances the bactericidal activity of neutrophils. The chain is Prenylcysteine oxidase 1-like (PCYOX1L) from Bos taurus (Bovine).